A 102-amino-acid chain; its full sequence is uncharacterized protein (102 aa).

This is an uncharacterized protein from Bacillus subtilis (strain 168).